Reading from the N-terminus, the 297-residue chain is Acetyl-coenzyme A carboxylase carboxyl transferase subunit beta (297 aa).

A disordered region spans residues 1-23 (MSWIERILGRTSSSSSSSKSKVP). In terms of domain architecture, CoA carboxyltransferase N-terminal spans 26-295 (VWTKCTSCEQ…PFKTAELIVE (270 aa)). Residues Cys-30, Cys-33, Cys-49, and Cys-52 each coordinate Zn(2+). Residues 30-52 (CTSCEQVLYSEELKRNMHVCPKC) form a C4-type zinc finger.

It belongs to the AccD/PCCB family. Acetyl-CoA carboxylase is a heterohexamer composed of biotin carboxyl carrier protein (AccB), biotin carboxylase (AccC) and two subunits each of ACCase subunit alpha (AccA) and ACCase subunit beta (AccD). Requires Zn(2+) as cofactor.

It localises to the cytoplasm. It catalyses the reaction N(6)-carboxybiotinyl-L-lysyl-[protein] + acetyl-CoA = N(6)-biotinyl-L-lysyl-[protein] + malonyl-CoA. It functions in the pathway lipid metabolism; malonyl-CoA biosynthesis; malonyl-CoA from acetyl-CoA: step 1/1. Its function is as follows. Component of the acetyl coenzyme A carboxylase (ACC) complex. Biotin carboxylase (BC) catalyzes the carboxylation of biotin on its carrier protein (BCCP) and then the CO(2) group is transferred by the transcarboxylase to acetyl-CoA to form malonyl-CoA. This is Acetyl-coenzyme A carboxylase carboxyl transferase subunit beta from Actinobacillus pleuropneumoniae serotype 3 (strain JL03).